The chain runs to 165 residues: Free methionine-R-sulfoxide reductase (165 aa).

The GAF domain occupies 49–149 (LLEDDTLVLG…LRQLVAQLEK (101 aa)).

This sequence belongs to the free Met sulfoxide reductase family.

The catalysed reaction is [thioredoxin]-disulfide + L-methionine + H2O = L-methionine (R)-S-oxide + [thioredoxin]-dithiol. Catalyzes the reversible oxidation-reduction of the R-enantiomer of free methionine sulfoxide to methionine. Specific for free L-methionine-(R)-S-oxide. This chain is Free methionine-R-sulfoxide reductase (msrC), found in Escherichia coli (strain K12).